The primary structure comprises 202 residues: Holliday junction resolvase RecU (202 aa).

Residues T85, D87, E100, and Q119 each coordinate Mg(2+).

Belongs to the RecU family. It depends on Mg(2+) as a cofactor.

Its subcellular location is the cytoplasm. The catalysed reaction is Endonucleolytic cleavage at a junction such as a reciprocal single-stranded crossover between two homologous DNA duplexes (Holliday junction).. In terms of biological role, endonuclease that resolves Holliday junction intermediates in genetic recombination. Cleaves mobile four-strand junctions by introducing symmetrical nicks in paired strands. Promotes annealing of linear ssDNA with homologous dsDNA. Required for DNA repair, homologous recombination and chromosome segregation. The polypeptide is Holliday junction resolvase RecU (Streptococcus equi subsp. zooepidemicus (strain H70)).